A 125-amino-acid polypeptide reads, in one-letter code: Large ribosomal subunit protein bL12 (125 aa).

This sequence belongs to the bacterial ribosomal protein bL12 family. Homodimer. Part of the ribosomal stalk of the 50S ribosomal subunit. Forms a multimeric L10(L12)X complex, where L10 forms an elongated spine to which 2 to 4 L12 dimers bind in a sequential fashion. Binds GTP-bound translation factors.

Its function is as follows. Forms part of the ribosomal stalk which helps the ribosome interact with GTP-bound translation factors. Is thus essential for accurate translation. The polypeptide is Large ribosomal subunit protein bL12 (Methylibium petroleiphilum (strain ATCC BAA-1232 / LMG 22953 / PM1)).